The chain runs to 381 residues: Layilin (381 aa).

The N-terminal stretch at methionine 1–glycine 24 is a signal peptide. The Extracellular portion of the chain corresponds to arginine 25–alanine 235. Positions threonine 45–lysine 185 constitute a C-type lectin domain. Disulfide bonds link cysteine 71–cysteine 184 and cysteine 150–cysteine 176. N-linked (GlcNAc...) asparagine glycosylation is present at asparagine 117. The helical transmembrane segment at tyrosine 236–tryptophan 256 threads the bilayer. Over valine 257–tyrosine 381 the chain is Cytoplasmic. Serine 286 and serine 299 each carry phosphoserine. Residues aspartate 330 to tryptophan 374 form an interaction with NF2 region. Positions asparagine 337–tyrosine 381 are interaction with TLN1. Tandem repeats lie at residues glutamate 340–valine 344, glutamate 350–valine 354, asparagine 356–tyrosine 359, glutamate 371–valine 375, and asparagine 377–tyrosine 380. A 3 X 5 AA repeats of E-S-G-X-V region spans residues glutamate 340–valine 375. Positions asparagine 356 to tyrosine 380 are 2 X 4 AA repeats of N-X-I-Y.

In terms of assembly, interacts with TLN1. Interacts with NF2 and RDX.

It is found in the membrane. In terms of biological role, receptor for hyaluronate. The chain is Layilin (Layn) from Mus musculus (Mouse).